The primary structure comprises 177 residues: ATP synthase subunit delta (177 aa).

This sequence belongs to the ATPase delta chain family. As to quaternary structure, F-type ATPases have 2 components, F(1) - the catalytic core - and F(0) - the membrane proton channel. F(1) has five subunits: alpha(3), beta(3), gamma(1), delta(1), epsilon(1). F(0) has three main subunits: a(1), b(2) and c(10-14). The alpha and beta chains form an alternating ring which encloses part of the gamma chain. F(1) is attached to F(0) by a central stalk formed by the gamma and epsilon chains, while a peripheral stalk is formed by the delta and b chains.

The protein resides in the cell inner membrane. In terms of biological role, f(1)F(0) ATP synthase produces ATP from ADP in the presence of a proton or sodium gradient. F-type ATPases consist of two structural domains, F(1) containing the extramembraneous catalytic core and F(0) containing the membrane proton channel, linked together by a central stalk and a peripheral stalk. During catalysis, ATP synthesis in the catalytic domain of F(1) is coupled via a rotary mechanism of the central stalk subunits to proton translocation. Its function is as follows. This protein is part of the stalk that links CF(0) to CF(1). It either transmits conformational changes from CF(0) to CF(1) or is implicated in proton conduction. This Proteus mirabilis (strain HI4320) protein is ATP synthase subunit delta.